The primary structure comprises 246 residues: 23S rRNA (guanosine-2'-O-)-methyltransferase RlmB (246 aa).

Residues Gly-198, Ile-218, and Leu-227 each coordinate S-adenosyl-L-methionine.

The protein belongs to the class IV-like SAM-binding methyltransferase superfamily. RNA methyltransferase TrmH family. RlmB subfamily.

It localises to the cytoplasm. It carries out the reaction guanosine(2251) in 23S rRNA + S-adenosyl-L-methionine = 2'-O-methylguanosine(2251) in 23S rRNA + S-adenosyl-L-homocysteine + H(+). Its function is as follows. Specifically methylates the ribose of guanosine 2251 in 23S rRNA. The polypeptide is 23S rRNA (guanosine-2'-O-)-methyltransferase RlmB (Shewanella oneidensis (strain ATCC 700550 / JCM 31522 / CIP 106686 / LMG 19005 / NCIMB 14063 / MR-1)).